Here is a 226-residue protein sequence, read N- to C-terminus: MNEDLFTPFTTPTVLGLPAAILVILFPPLLVPTSKHFINNRLITTQQWLIRLTLKQMMITHNTKGRTWSLMLTSLIIFIASTNLLGLFPYSFTPTTQLSMNLAMAIPLWASTVAMGLRFKAKISLAHLLPQGTPTPLIPMLIIIETISLFIQPLALAVRLTANITAGHLLMHLIGSATLTMLTINLPLTLITLTILTLLTILEIAVALIQAYVFTLLVSLYLHDNS.

Transmembrane regions (helical) follow at residues 12–32 (PTVL…LLVP), 68–88 (WSLM…LGLF), 97–117 (QLSM…AMGL), 138–158 (IPML…ALAV), 164–184 (ITAG…MLTI), and 189–209 (TLIT…VALI).

The protein belongs to the ATPase A chain family. Component of the ATP synthase complex composed at least of ATP5F1A/subunit alpha, ATP5F1B/subunit beta, ATP5MC1/subunit c (homooctomer), MT-ATP6/subunit a, MT-ATP8/subunit 8, ATP5ME/subunit e, ATP5MF/subunit f, ATP5MG/subunit g, ATP5MK/subunit k, ATP5MJ/subunit j, ATP5F1C/subunit gamma, ATP5F1D/subunit delta, ATP5F1E/subunit epsilon, ATP5PF/subunit F6, ATP5PB/subunit b, ATP5PD/subunit d, ATP5PO/subunit OSCP. ATP synthase complex consists of a soluble F(1) head domain (subunits alpha(3) and beta(3)) - the catalytic core - and a membrane F(0) domain - the membrane proton channel (subunits c, a, 8, e, f, g, k and j). These two domains are linked by a central stalk (subunits gamma, delta, and epsilon) rotating inside the F1 region and a stationary peripheral stalk (subunits F6, b, d, and OSCP). Interacts with DNAJC30; interaction is direct.

Its subcellular location is the mitochondrion inner membrane. It carries out the reaction H(+)(in) = H(+)(out). In terms of biological role, subunit a, of the mitochondrial membrane ATP synthase complex (F(1)F(0) ATP synthase or Complex V) that produces ATP from ADP in the presence of a proton gradient across the membrane which is generated by electron transport complexes of the respiratory chain. ATP synthase complex consist of a soluble F(1) head domain - the catalytic core - and a membrane F(1) domain - the membrane proton channel. These two domains are linked by a central stalk rotating inside the F(1) region and a stationary peripheral stalk. During catalysis, ATP synthesis in the catalytic domain of F(1) is coupled via a rotary mechanism of the central stalk subunits to proton translocation. With the subunit c (ATP5MC1), forms the proton-conducting channel in the F(0) domain, that contains two crucial half-channels (inlet and outlet) that facilitate proton movement from the mitochondrial intermembrane space (IMS) into the matrix. Protons are taken up via the inlet half-channel and released through the outlet half-channel, following a Grotthuss mechanism. This chain is ATP synthase F(0) complex subunit a, found in Pongo pygmaeus (Bornean orangutan).